Here is a 340-residue protein sequence, read N- to C-terminus: MKQLKKQHEEILKAVVGAYLTQKNEISSALLVKNYGIKFSPAKVRYLMTALEDEGLLVKETKSSGRKPTNKGLEYYAKFLSNAFDLKLINNLEKIFLNRKDNIYNTIEEVTKELASLTGATFVTKFKDPNLILKSINLFEVSESLATIILVVSNGEVLSRKIDIPENKAIKISDLKIAMNIFQDNLIDCKLIDLEKRILLLKDILAEKIIQYEDVIESYVKSILGIGIKSQIYGRENIILSRKIAREDVNEILNILEKNSIWDALEKNSNDFEEIRISINSKGAFFSKRIDENNNLTEISVVAPNESDSNSIKSGIMLLTKIITNNINEKEKDKNERKHS.

It belongs to the HrcA family.

Negative regulator of class I heat shock genes (grpE-dnaK-dnaJ and groELS operons). Prevents heat-shock induction of these operons. This chain is Heat-inducible transcription repressor HrcA, found in Mycoplasmopsis synoviae (strain 53) (Mycoplasma synoviae).